The following is a 690-amino-acid chain: Beta-galactosidase (690 aa).

N173 lines the substrate pocket. Residue E174 is the Proton donor of the active site. W345 lines the substrate pocket.

Belongs to the glycosyl hydrolase 42 family.

The enzyme catalyses Hydrolysis of terminal non-reducing beta-D-galactose residues in beta-D-galactosides.. Activity stimulated by beta-mercaptoethanol. Functionally, highly specific towards beta-D-galactoside substrates. Hydrolyzes 5-bromo-4-chloro-3-indolyl-beta-D-galactopyranoside (X-Gal) and o-nitrophenyl-beta-D-galactopyranoside (ONPG). Has activity against p-nitrophenyl(pNP)-beta-D-galactoside, but not significantly at all towards pNP-alpha-D-galactoside, pNP-beta-D-glucoside, pNP-beta-D-mannoside, pNP-beta-L-fucoside, pNP-beta-D-xyloside, pNP-beta-L-arabinoside, pNP-beta-D-galuronide, pNP-beta-D-glucuronide, pNP-beta-D-lactoside or pNP-beta-D-cellobioside. This is Beta-galactosidase from Arthrobacter sp.